The following is a 189-amino-acid chain: MLVVVSLTPPVGVCVGLFHHLLSLGGGITTCITSMETGITKWSGSLRCNSQMQKEKGERKGKEEERKRGKEEKIWFHSKKMKIHDYCIVLYCILFYFYFVLILFYFIALYFILHPFYSTILFFFPLFIKCSHLHTLTSFYSLLSSLFSSLIPKHSLHLAPLRKLNLSHFVSPLCAMFPHVGLRLLQTTQ.

3 helical membrane passes run 2–22 (LVVV…HHLL), 93–113 (ILFY…YFIL), and 116–136 (FYST…LHTL).

Its subcellular location is the membrane. This is an uncharacterized protein from Schizosaccharomyces pombe (strain 972 / ATCC 24843) (Fission yeast).